Reading from the N-terminus, the 1036-residue chain is MRSYLFIPLLVSFLFPVALANASLEKNLVDTNLYLSPNTIQNRSYTAGFNLKNDYFRKSFNFDNEVIQRPNQNNYFAKTYSNEWSELVNKYSDNYKQIIRDNNFHWYNNIYYLKNIKLKIESSYIAHAFSSTFRYPGIRNSWSSDIHSEQRFYFHSQAISNFFPRDGHTNEKWTEVPSRNIEITGTNPDGSWNKSWYKPDNPYFWDLTKPSHKKAYFIEAKFVHMWGSTLRMIKPTPEDVIRNIKWLRKGNNGNYVIDFNAPMWYYLGQESRGFFADWKNNIFVAPDFWWGLAMTPIRAYRFWWDLELVKVPPVFEQNNAQWNEPFPGRSSWFFSINSNKQVDAHWMSINEFKEKMKKDRKIIEAFTNNREITQTILRLGNGLVVRPETEDSRREAFNSKWDIFKHTPILPEQEVVHHQISFYLRQNNPDEVLPISFSNLSKLWISQLEFDINSLVSQTEKTLNKETIGTKIKPTIKFKDKFINAIKEVSLINQRIDESIDKNEALKSFNISTNNQSNFYPNLDYLYNLLQMSPNNKEELFFIRNLPRMVKTIFDRSTLTVKVKIGNSVNEITLLRNNKNYFDLSSIEEFLTEKQKADNEMNIEFLALNFFVDGYESENISNYSVEPLFDSIKKLSTIKRTKDGFEYKFKYRKDFNEQRWIAKDFRIPLNKNVQNFNVAELKKRNEKFNDYEKRQMAFIIKNSFKSKDKNIDLDINSNSLTFVDNPKKYFKHLEPTNEKKGIFYVLAEINNSNELFKYGSESDSEIIKDKMYFLSQNQKNPKLRTYLFKFHTNKLFVDKNDLGFKLEKDKVFLSVDNLKIAELDLKSSSFKFLEDYQLDFHEPFSLNDEQLLVDKLNITLSEKRLQTTKNVRFNLKNKFINIHLVENKNQFNLVFDVDVRSKKLFIKGVNNDNQVFSISYDLKITNNQTLLIVDANGFDNSIWFDITSENQTQLFKALSFYLKQNNLQFKRVPDFNLKSQDKSYEVDKLEKNEIKKQDTNVELILWVIFGIIISLMISSAVLFLKWRKKKIVKKRN.

Helical transmembrane passes span 4–24 (YLFI…NASL) and 1004–1024 (ILWV…VLFL).

This sequence belongs to the MG414/MG415 family.

It localises to the cell membrane. This is an uncharacterized protein from Mycoplasma genitalium (strain ATCC 33530 / DSM 19775 / NCTC 10195 / G37) (Mycoplasmoides genitalium).